The following is a 418-amino-acid chain: Putative competence-damage inducible protein (418 aa).

Belongs to the CinA family.

In Streptococcus pneumoniae (strain JJA), this protein is Putative competence-damage inducible protein.